We begin with the raw amino-acid sequence, 276 residues long: Dermonecrotic toxin LafSicTox-betaIE2 (276 aa).

Residue His-5 is part of the active site. The Mg(2+) site is built by Glu-25 and Asp-27. His-41 functions as the Nucleophile in the catalytic mechanism. Disulfide bonds link Cys-45-Cys-51 and Cys-47-Cys-189. Asp-85 contributes to the Mg(2+) binding site.

The protein belongs to the arthropod phospholipase D family. Class II subfamily. It depends on Mg(2+) as a cofactor. As to expression, expressed by the venom gland.

The protein resides in the secreted. The enzyme catalyses an N-(acyl)-sphingosylphosphocholine = an N-(acyl)-sphingosyl-1,3-cyclic phosphate + choline. It catalyses the reaction an N-(acyl)-sphingosylphosphoethanolamine = an N-(acyl)-sphingosyl-1,3-cyclic phosphate + ethanolamine. It carries out the reaction a 1-acyl-sn-glycero-3-phosphocholine = a 1-acyl-sn-glycero-2,3-cyclic phosphate + choline. The catalysed reaction is a 1-acyl-sn-glycero-3-phosphoethanolamine = a 1-acyl-sn-glycero-2,3-cyclic phosphate + ethanolamine. In terms of biological role, dermonecrotic toxins cleave the phosphodiester linkage between the phosphate and headgroup of certain phospholipids (sphingolipid and lysolipid substrates), forming an alcohol (often choline) and a cyclic phosphate. This toxin acts on sphingomyelin (SM). It may also act on ceramide phosphoethanolamine (CPE), lysophosphatidylcholine (LPC) and lysophosphatidylethanolamine (LPE), but not on lysophosphatidylserine (LPS), and lysophosphatidylglycerol (LPG). It acts by transphosphatidylation, releasing exclusively cyclic phosphate products as second products. Induces dermonecrosis, hemolysis, increased vascular permeability, edema, inflammatory response, and platelet aggregation. The polypeptide is Dermonecrotic toxin LafSicTox-betaIE2 (Loxosceles aff. spinulosa (strain GJB-2008) (Recluse spider)).